Consider the following 317-residue polypeptide: Protoheme IX farnesyltransferase (317 aa).

Helical transmembrane passes span Phe25–Met45, Pro54–Leu74, Leu126–Leu146, Ile154–Gly174, Leu181–Val201, Ile227–Leu244, Leu249–His271, and Ala281–Leu301.

It belongs to the UbiA prenyltransferase family. Protoheme IX farnesyltransferase subfamily.

It localises to the cell inner membrane. It carries out the reaction heme b + (2E,6E)-farnesyl diphosphate + H2O = Fe(II)-heme o + diphosphate. Its pathway is porphyrin-containing compound metabolism; heme O biosynthesis; heme O from protoheme: step 1/1. Converts heme B (protoheme IX) to heme O by substitution of the vinyl group on carbon 2 of heme B porphyrin ring with a hydroxyethyl farnesyl side group. This chain is Protoheme IX farnesyltransferase, found in Methylobacterium sp. (strain 4-46).